A 585-amino-acid chain; its full sequence is Protein FAM151A (585 aa).

The chain crosses the membrane as a helical span at residues 14–34; sequence WVFAGITCVSVVVIAAIVLAI.

It belongs to the menorin family.

Its subcellular location is the membrane. In Homo sapiens (Human), this protein is Protein FAM151A (FAM151A).